The following is a 21-amino-acid chain: M-lycotoxin-Ls4a (21 aa).

The residue at position 21 (L21) is a Leucine amide.

Expressed by the venom gland.

The protein localises to the secreted. May inhibit growth of bacteria. The polypeptide is M-lycotoxin-Ls4a (Lycosa singoriensis (Wolf spider)).